The sequence spans 767 residues: Ribonucleoside-diphosphate reductase subunit alpha (767 aa).

The disordered stretch occupies residues 1–30 (MHPTLISAPISSSANDAHAGTSQGSHQGHR). A compositionally biased stretch (polar residues) spans 9-26 (PISSSANDAHAGTSQGSH). The 90-residue stretch at 31–120 (IQVIRRDGSS…VWSLWKDTLV (90 aa)) folds into the ATP-cone domain. Substrate is bound by residues Thr228, 243-244 (SC), Gly272, 460-464 (NLCCE), and 631-635 (PNTSS). A disulfide bridge links Cys244 with Cys478. Asn460 acts as the Proton acceptor in catalysis. Cys462 functions as the Cysteine radical intermediate in the catalytic mechanism. Glu464 serves as the catalytic Proton acceptor.

This sequence belongs to the ribonucleoside diphosphate reductase large chain family. In terms of assembly, tetramer of two alpha and two beta subunits.

It catalyses the reaction a 2'-deoxyribonucleoside 5'-diphosphate + [thioredoxin]-disulfide + H2O = a ribonucleoside 5'-diphosphate + [thioredoxin]-dithiol. With respect to regulation, under complex allosteric control mediated by deoxynucleoside triphosphates and ATP binding. The type of nucleotide bound at the specificity site determines substrate preference. It seems probable that ATP makes the enzyme reduce CDP and UDP, dGTP favors ADP reduction and dTTP favors GDP reduction. In terms of biological role, provides the precursors necessary for DNA synthesis. Catalyzes the biosynthesis of deoxyribonucleotides from the corresponding ribonucleotides. This chain is Ribonucleoside-diphosphate reductase subunit alpha (nrdA), found in Synechocystis sp. (strain ATCC 27184 / PCC 6803 / Kazusa).